A 171-amino-acid chain; its full sequence is Large ribosomal subunit protein uL10 (171 aa).

Belongs to the universal ribosomal protein uL10 family. As to quaternary structure, part of the ribosomal stalk of the 50S ribosomal subunit. The N-terminus interacts with L11 and the large rRNA to form the base of the stalk. The C-terminus forms an elongated spine to which L12 dimers bind in a sequential fashion forming a multimeric L10(L12)X complex.

Its function is as follows. Forms part of the ribosomal stalk, playing a central role in the interaction of the ribosome with GTP-bound translation factors. The protein is Large ribosomal subunit protein uL10 of Cereibacter sphaeroides (strain ATCC 17023 / DSM 158 / JCM 6121 / CCUG 31486 / LMG 2827 / NBRC 12203 / NCIMB 8253 / ATH 2.4.1.) (Rhodobacter sphaeroides).